The chain runs to 494 residues: Neuronal pentraxin receptor (494 aa).

Topologically, residues 1–2 (MK) are cytoplasmic. Residues 3-23 (FLAVLLAAGMLAFLGAVICII) traverse the membrane as a helical; Signal-anchor for type II membrane protein segment. Topologically, residues 24–494 (ASVPLAASPA…FDVCKRRAKA (471 aa)) are extracellular. The interval 37-80 (PGGTDNASAASAAGAPGPQRSLSALQGAGGSAGPSVLPGEPAAS) is disordered. A glycan (N-linked (GlcNAc...) asparagine) is linked at N42. Low complexity-rich tracts occupy residues 43–62 (ASAA…SALQ) and 69–80 (GPSVLPGEPAAS). An N-linked (GlcNAc...) asparagine glycan is attached at N211. The region spanning 286 to 488 (DAFKVSIPIR…GAKKAAFDVC (203 aa)) is the Pentraxin (PTX) domain. Residues C316 and C377 are joined by a disulfide bond. Residues N341, E419, Q420, D421, and Q431 each contribute to the Ca(2+) site. N-linked (GlcNAc...) asparagine glycosylation occurs at N457.

Interacts with KLHL2. Heteropentamer with NPTX1 and/or NPTX2. Also binds taipoxin-associated calcium-binding protein 49 (TCBP49/RCN2). The cofactor is Ca(2+). Post-translationally, N-glycosylated. In terms of processing, ubiquitinated by a cullin-RING-based BCR (BTB-CUL3-RBX1) E3 ubiquitin-protein ligase complex containing KLHL2. As to expression, brain specific.

Its subcellular location is the membrane. May be involved in mediating uptake of synaptic material during synapse remodeling or in mediating the synaptic clustering of AMPA glutamate receptors at a subset of excitatory synapses. The polypeptide is Neuronal pentraxin receptor (Nptxr) (Rattus norvegicus (Rat)).